An 879-amino-acid chain; its full sequence is Mediator of RNA polymerase II transcription subunit 14 (879 aa).

The protein belongs to the Mediator complex subunit 14 family. In terms of assembly, component of the Mediator complex.

Its subcellular location is the nucleus. Component of the Mediator complex, a coactivator involved in the regulated transcription of nearly all RNA polymerase II-dependent genes. Mediator functions as a bridge to convey information from gene-specific regulatory proteins to the basal RNA polymerase II transcription machinery. Mediator is recruited to promoters by direct interactions with regulatory proteins and serves as a scaffold for the assembly of a functional preinitiation complex with RNA polymerase II and the general transcription factors. The chain is Mediator of RNA polymerase II transcription subunit 14 (med14) from Schizosaccharomyces pombe (strain 972 / ATCC 24843) (Fission yeast).